A 177-amino-acid polypeptide reads, in one-letter code: Peptidoglycan-associated lipoprotein (177 aa).

Residues 1-32 form the signal peptide; that stretch reads MSRTNISALSPMQKLARNPAVIAMTLALALAG. Cys33 carries the N-palmitoyl cysteine lipid modification. Residue Cys33 is the site of S-diacylglycerol cysteine attachment. The OmpA-like domain maps to 59-176; that stretch reads QQDFTVNVGD…RAVTVLGGAG (118 aa).

The protein belongs to the Pal lipoprotein family. The Tol-Pal system is composed of five core proteins: the inner membrane proteins TolA, TolQ and TolR, the periplasmic protein TolB and the outer membrane protein Pal. They form a network linking the inner and outer membranes and the peptidoglycan layer.

It localises to the cell outer membrane. In terms of biological role, part of the Tol-Pal system, which plays a role in outer membrane invagination during cell division and is important for maintaining outer membrane integrity. In Agrobacterium fabrum (strain C58 / ATCC 33970) (Agrobacterium tumefaciens (strain C58)), this protein is Peptidoglycan-associated lipoprotein.